Reading from the N-terminus, the 553-residue chain is MSERIFIGVAWPYANSQLHLGHVAGAYLPADIFARYHRTRGDEVLMVSGSDMHGTPITIRAEQEGITAAEVAERYHRLFMASWPKLGISWDCYTSTATANHARTAQQMFLSLYEKGYIYKDTVCQPFCPHCNRFLPDRYVEGTCPHCKYEGARGDQCDNCGKPLNAAELLNFRCKNCGNPPEFRETEHFFLKLSAFEEELTHWVETKTYWRTNVLNFTLRYLKEGLKDRAITRDLDWGVPLPLPGYEGKRLYVWFEAVIGYLSASIEWAASKGQPDEWQKYWGGDTKSYYFIGKDNIPFHTIIWPAMLMGRGGLDLPYDVPSNEYLTIEAQKFSKSRNKAIWVDDVLSRYSVDTLRYLLSANMPESSDMDFSWREFVRRNNDELVATYGNLAQRVLTMVCRNFDNKVPEYGELDERSLNLIEKTSAMLFETDKALHGCNFREAIKLAMSLAQEANRYLDEKAPWKEIKVDKAAAARSLYVAMAALSGLRVAFYPFLPESSSRLSTYLGFGSEIEKDGWVLKMPVAGQEMIPPEPLFKKLEDSVVEEETARMGL.

A 'HIGH' region motif is present at residues 12 to 22 (PYANSQLHLGH). 4 residues coordinate Zn(2+): C144, C147, C157, and C160. The 'KMSKS' region signature appears at 332–336 (KFSKS). K335 is an ATP binding site.

The protein belongs to the class-I aminoacyl-tRNA synthetase family. MetG type 1 subfamily. In terms of assembly, monomer. It depends on Zn(2+) as a cofactor.

The protein localises to the cytoplasm. The catalysed reaction is tRNA(Met) + L-methionine + ATP = L-methionyl-tRNA(Met) + AMP + diphosphate. Is required not only for elongation of protein synthesis but also for the initiation of all mRNA translation through initiator tRNA(fMet) aminoacylation. The polypeptide is Methionine--tRNA ligase (Dehalococcoides mccartyi (strain ATCC BAA-2266 / KCTC 15142 / 195) (Dehalococcoides ethenogenes (strain 195))).